A 346-amino-acid chain; its full sequence is Methionine import ATP-binding protein MetN 1 (346 aa).

The 240-residue stretch at 2 to 241 (IELKNVSKVF…PQHVTTKKFV (240 aa)) folds into the ABC transporter domain. ATP is bound at residue 38 to 45 (GYSGAGKS).

Belongs to the ABC transporter superfamily. Methionine importer (TC 3.A.1.24) family. The complex is composed of two ATP-binding proteins (MetN), two transmembrane proteins (MetI) and a solute-binding protein (MetQ).

The protein localises to the cell membrane. The catalysed reaction is L-methionine(out) + ATP + H2O = L-methionine(in) + ADP + phosphate + H(+). The enzyme catalyses D-methionine(out) + ATP + H2O = D-methionine(in) + ADP + phosphate + H(+). Its function is as follows. Part of the ABC transporter complex MetNIQ involved in methionine import. Responsible for energy coupling to the transport system. This Bacillus cereus (strain ZK / E33L) protein is Methionine import ATP-binding protein MetN 1.